The chain runs to 197 residues: Peptidyl-tRNA hydrolase (197 aa).

Tyrosine 18 is a binding site for tRNA. Catalysis depends on histidine 23, which acts as the Proton acceptor. TRNA-binding residues include phenylalanine 69, asparagine 71, and asparagine 117.

Belongs to the PTH family. As to quaternary structure, monomer.

Its subcellular location is the cytoplasm. The catalysed reaction is an N-acyl-L-alpha-aminoacyl-tRNA + H2O = an N-acyl-L-amino acid + a tRNA + H(+). Hydrolyzes ribosome-free peptidyl-tRNAs (with 1 or more amino acids incorporated), which drop off the ribosome during protein synthesis, or as a result of ribosome stalling. Its function is as follows. Catalyzes the release of premature peptidyl moieties from peptidyl-tRNA molecules trapped in stalled 50S ribosomal subunits, and thus maintains levels of free tRNAs and 50S ribosomes. This Tolumonas auensis (strain DSM 9187 / NBRC 110442 / TA 4) protein is Peptidyl-tRNA hydrolase.